Reading from the N-terminus, the 635-residue chain is Threonine--tRNA ligase (635 aa).

Positions 1–61 constitute a TGS domain; sequence MINISFPDGS…DNDCKLRILT (61 aa). The tract at residues 242–533 is catalytic; the sequence is DHRKLGRELD…LIEEYAGRFP (292 aa). 3 residues coordinate Zn(2+): C333, H384, and H510.

This sequence belongs to the class-II aminoacyl-tRNA synthetase family. Homodimer. The cofactor is Zn(2+).

It is found in the cytoplasm. It catalyses the reaction tRNA(Thr) + L-threonine + ATP = L-threonyl-tRNA(Thr) + AMP + diphosphate + H(+). Its function is as follows. Catalyzes the attachment of threonine to tRNA(Thr) in a two-step reaction: L-threonine is first activated by ATP to form Thr-AMP and then transferred to the acceptor end of tRNA(Thr). Also edits incorrectly charged L-seryl-tRNA(Thr). The polypeptide is Threonine--tRNA ligase (Rickettsia peacockii (strain Rustic)).